Here is a 100-residue protein sequence, read N- to C-terminus: Putative ESAT-6-like protein Y (100 aa).

This sequence belongs to the WXG100 family.

In Mycobacterium leprae (strain TN), this protein is Putative ESAT-6-like protein Y.